Reading from the N-terminus, the 152-residue chain is UPF0266 membrane protein YobD (152 aa).

Helical transmembrane passes span 6-26, 45-65, and 67-87; these read LVLI…QFIM, IDSV…VTNH, and ALIT…IFWI.

It belongs to the UPF0266 family.

Its subcellular location is the cell inner membrane. The polypeptide is UPF0266 membrane protein YobD (Escherichia coli O157:H7 (strain EC4115 / EHEC)).